We begin with the raw amino-acid sequence, 261 residues long: MALIGVLANLLILCLSYARTAPDRIIGGLECNQNEHRSLVLLYNSGGFFCSGTLINHEWVLTAAHCNRENIQIKLGVHNIHVPNEDEQIRVPKEKVCCLGTMNCTQWNQDIMLIRLNSSVNYSTHIAPLSLPSNPPSVGSVCRVMGWGTITSPEVTYPEVPHCVNIQILHKELCEAAYPILLGNSNILCAGKLLGDKDSCKGDSGGPLICNGQIQGIVSWGGFPCAQILEPGVYTKVFDYIDWIQDIMAGNANVICPGDNF.

The first 20 residues, 1–20 (MALIGVLANLLILCLSYART), serve as a signal peptide directing secretion. A propeptide spanning residues 21-24 (APDR) is cleaved from the precursor. Residues 25 to 249 (IIGGLECNQN…YIDWIQDIMA (225 aa)) form the Peptidase S1 domain. Intrachain disulfides connect Cys31-Cys163, Cys50-Cys66, Cys98-Cys256, Cys142-Cys210, Cys174-Cys189, and Cys200-Cys225. The active-site Charge relay system is His65. Asn103 is a glycosylation site (N-linked (GlcNAc...) asparagine). The Charge relay system role is filled by Asp110. Asn117 and Asn121 each carry an N-linked (GlcNAc...) asparagine glycan. The Charge relay system role is filled by Ser204.

It belongs to the peptidase S1 family. Snake venom subfamily. In terms of assembly, monomer. In terms of tissue distribution, expressed by the venom gland.

Its subcellular location is the secreted. Functionally, snake venom serine protease that may act in the hemostasis system of the prey. The chain is Snake venom serine protease from Philodryas olfersii (Green snake).